The sequence spans 136 residues: Small ribosomal subunit protein bS6 (136 aa).

A compositionally biased stretch (basic and acidic residues) spans 117 to 130 (EERSRSSRRQREDV). The tract at residues 117 to 136 (EERSRSSRRQREDVIEGVEL) is disordered.

This sequence belongs to the bacterial ribosomal protein bS6 family.

In terms of biological role, binds together with bS18 to 16S ribosomal RNA. This Bartonella quintana (strain Toulouse) (Rochalimaea quintana) protein is Small ribosomal subunit protein bS6.